The primary structure comprises 167 residues: MHCYNGMTGLHHREPGMVGAGLTDKRAWLELIADGHHVHPAAMSLCCCCAKERIVLITDAMQAAGMPDGRYTLCGEEVQMHGGVVRTASGGLAGSTLSVDAAVRNMVELTGVTPAEAIHMASLHPARMLGVDGVLGSLKPGKRASVVALDSGLHVQQIWIQGQLASF.

The protein belongs to the metallo-dependent hydrolases superfamily. NagA family.

It catalyses the reaction N-acetyl-D-galactosamine 6-phosphate + H2O = D-galactosamine 6-phosphate + acetate. This Escherichia coli (strain K12) protein is Putative N-acetylgalactosamine-6-phosphate deacetylase (agaA).